The primary structure comprises 314 residues: NF-kappa-B inhibitor alpha (314 aa).

The tract at residues 1–40 (MFQPAGHGQDWAMEGPRDGLKKERLVDDRHDSGLDSMKDE) is disordered. The span at 15–40 (GPRDGLKKERLVDDRHDSGLDSMKDE) shows a compositional bias: basic and acidic residues. Residue lysine 21 forms a Glycyl lysine isopeptide (Lys-Gly) (interchain with G-Cter in SUMO); alternate linkage. Lysine 21 participates in a covalent cross-link: Glycyl lysine isopeptide (Lys-Gly) (interchain with G-Cter in ubiquitin); alternate. Lysine 22 participates in a covalent cross-link: Glycyl lysine isopeptide (Lys-Gly) (interchain with G-Cter in ubiquitin). Residues 30 to 36 (HDSGLDS) carry the Destruction motif motif. Serine 32 is subject to Phosphoserine; by IKKB. Position 36 is a phosphoserine; by IKKA, IKKB, IKKE and TBK1 (serine 36). Tyrosine 42 bears the Phosphotyrosine mark. The Nuclear export signal motif lies at 45–54 (MVKELREIRL). ANK repeat units follow at residues 73–103 (DGDS…DLAF), 110–139 (LQQT…DPEL), 143–172 (RGNT…PQHL), 182–211 (NGHT…DVNA), and 216–245 (NGRT…DVNR). A Nuclear import signal motif is present at residues 110–120 (LQQTPLHLAVI). Residues asparagine 210 and asparagine 244 each carry the (3S)-3-hydroxyasparagine; by HIF1AN modification. 2 positions are modified to phosphoserine; by CK2: serine 283 and serine 288. Phosphothreonine; by CK2 is present on threonine 291. Serine 293 carries the phosphoserine; by CK2 modification. Position 296 is a phosphothreonine (threonine 296).

Belongs to the NF-kappa-B inhibitor family. Interacts with RELA; the interaction requires the nuclear import signal. Part of a 70-90 kDa complex at least consisting of CHUK, IKBKB, NFKBIA, RELA, ELP1 and MAP3K14. Interacts with NKIRAS1 and NKIRAS2. Interacts with RWDD3; the interaction enhances sumoylation. Interacts with PRMT2. Interacts with PRKACA in platelets; this interaction is disrupted by thrombin and collagen. Interacts with MEFV. Interacts with DDRGK1; positively regulates NFKBIA phosphorylation and degradation. Interacts with HNRNPA2B1; the interaction may be mediated by the RRM2 domain of HNRNPA2B1, and HNRNPA2B1 may interact simultaneously with FAM76B and either NFKBIA or NFKBIE to form a complex. Phosphorylated at Ser-32 and Ser-36 by IKKA/CHUK and IKKB/IKBKB; disables inhibition of NF-kappa-B DNA-binding activity. Phosphorylation at positions 32 and 36 is prerequisite to recognition by the SCF(FBXW11) and SCF(BTRC) complexes, leading to polyubiquitination and subsequent degradation. Post-translationally, polyubiquitinated at Lys-21 and/or Lys-22 following phosphorylation at Ser-32 and Ser-36. Monoubiquitinated at Lys-21 and/or Lys-22 by UBE2D3. Ubiquitin chain elongation is then performed by CDC34 in cooperation with the SCF(FBXW11) E3 ligase complex, building ubiquitin chains from the UBE2D3-primed NFKBIA-linked ubiquitin. The resulting polyubiquitination leads to protein degradation. Also ubiquitinated by the SCF(BTRC) complex following stimulus-dependent phosphorylation at Ser-32 and Ser-36. Deubiquitinated by USP38, leading to NF-kappa-B inhibition. In terms of processing, sumoylated; sumoylation requires the presence of the nuclear import signal. Sumoylation blocks ubiquitination and proteasome-mediated degradation of the protein thereby increasing the protein stability. Hydroxylated by HIF1AN. Highly expressed in lymph node, thymus followed by liver, brain, muscle, kidney, gastrointestinal and reproductive tract.

It localises to the cytoplasm. The protein localises to the nucleus. Its function is as follows. Inhibits the activity of dimeric NF-kappa-B/REL complexes by trapping REL (RELA/p65 and NFKB1/p50) dimers in the cytoplasm by masking their nuclear localization signals. On cellular stimulation by immune and pro-inflammatory responses, becomes phosphorylated promoting ubiquitination and degradation, enabling the dimeric RELA to translocate to the nucleus and activate transcription. The chain is NF-kappa-B inhibitor alpha (Nfkbia) from Mus musculus (Mouse).